A 436-amino-acid chain; its full sequence is 3-ketoacyl-CoA thiolase (436 aa).

The Acyl-thioester intermediate role is filled by cysteine 99. Residues histidine 392 and cysteine 422 each act as proton acceptor in the active site.

This sequence belongs to the thiolase-like superfamily. Thiolase family. Heterotetramer of two alpha chains (FadJ) and two beta chains (FadI).

Its subcellular location is the cytoplasm. The enzyme catalyses an acyl-CoA + acetyl-CoA = a 3-oxoacyl-CoA + CoA. Its pathway is lipid metabolism; fatty acid beta-oxidation. Catalyzes the final step of fatty acid oxidation in which acetyl-CoA is released and the CoA ester of a fatty acid two carbons shorter is formed. The polypeptide is 3-ketoacyl-CoA thiolase (Shewanella putrefaciens (strain CN-32 / ATCC BAA-453)).